Reading from the N-terminus, the 157-residue chain is MLKTTQTSLFIFIGVFLLIFGTDQAIKYAILEGFRYESSIIDIVLVFNKGVAFSLLSFLEGSLKYLQILLILGLFIFLMRQIELFKAHTIEFGMVFGAGVSNILDRFVHGGVVDYVYYHYGFDFAIFNFADVMIDVGVGVLLIRQFFFKQKQNKIKA.

4 consecutive transmembrane segments (helical) span residues 10–30, 36–56, 58–78, and 84–104; these read FIFI…KYAI, YESS…FSLL, FLEG…FIFL, and LFKA…SNIL. Residues Asp114 and Asp131 contribute to the active site. The helical transmembrane segment at 123-143 threads the bilayer; sequence DFAIFNFADVMIDVGVGVLLI.

The protein belongs to the peptidase A8 family.

It is found in the cell inner membrane. It catalyses the reaction Release of signal peptides from bacterial membrane prolipoproteins. Hydrolyzes -Xaa-Yaa-Zaa-|-(S,diacylglyceryl)Cys-, in which Xaa is hydrophobic (preferably Leu), and Yaa (Ala or Ser) and Zaa (Gly or Ala) have small, neutral side chains.. It participates in protein modification; lipoprotein biosynthesis (signal peptide cleavage). Its function is as follows. This protein specifically catalyzes the removal of signal peptides from prolipoproteins. The sequence is that of Lipoprotein signal peptidase from Helicobacter acinonychis (strain Sheeba).